A 170-amino-acid polypeptide reads, in one-letter code: Adenine phosphoribosyltransferase (170 aa).

This sequence belongs to the purine/pyrimidine phosphoribosyltransferase family. As to quaternary structure, homodimer.

It is found in the cytoplasm. It carries out the reaction AMP + diphosphate = 5-phospho-alpha-D-ribose 1-diphosphate + adenine. Its pathway is purine metabolism; AMP biosynthesis via salvage pathway; AMP from adenine: step 1/1. Functionally, catalyzes a salvage reaction resulting in the formation of AMP, that is energically less costly than de novo synthesis. The sequence is that of Adenine phosphoribosyltransferase from Fervidobacterium nodosum (strain ATCC 35602 / DSM 5306 / Rt17-B1).